A 286-amino-acid chain; its full sequence is General stress protein A (286 aa).

UDP is bound by residues 12–17 (CADDNY) and 111–112 (DC). Residues Asp111, Asp113, and His247 each coordinate Mn(2+). 247-253 (HFCGGEK) provides a ligand contact to UDP.

It belongs to the glycosyltransferase 8 family.

The sequence is that of General stress protein A (gspA) from Bacillus subtilis (strain 168).